The chain runs to 158 residues: Transcription elongation factor GreA (158 aa).

It belongs to the GreA/GreB family.

Functionally, necessary for efficient RNA polymerase transcription elongation past template-encoded arresting sites. The arresting sites in DNA have the property of trapping a certain fraction of elongating RNA polymerases that pass through, resulting in locked ternary complexes. Cleavage of the nascent transcript by cleavage factors such as GreA or GreB allows the resumption of elongation from the new 3'terminus. GreA releases sequences of 2 to 3 nucleotides. This is Transcription elongation factor GreA from Rhizobium etli (strain CIAT 652).